A 270-amino-acid chain; its full sequence is Shikimate dehydrogenase (NADP(+)) (270 aa).

Shikimate is bound by residues 14 to 16 (SKS) and Thr-61. Lys-65 (proton acceptor) is an active-site residue. Residues Asn-86 and Asp-101 each coordinate shikimate. NADP(+) contacts are provided by residues 126-130 (GAGGA), 150-155 (NRTVSK), and Met-213. Shikimate is bound at residue Tyr-215. Gly-237 is a binding site for NADP(+).

This sequence belongs to the shikimate dehydrogenase family. In terms of assembly, homodimer.

The catalysed reaction is shikimate + NADP(+) = 3-dehydroshikimate + NADPH + H(+). It functions in the pathway metabolic intermediate biosynthesis; chorismate biosynthesis; chorismate from D-erythrose 4-phosphate and phosphoenolpyruvate: step 4/7. Involved in the biosynthesis of the chorismate, which leads to the biosynthesis of aromatic amino acids. Catalyzes the reversible NADPH linked reduction of 3-dehydroshikimate (DHSA) to yield shikimate (SA). The chain is Shikimate dehydrogenase (NADP(+)) from Hahella chejuensis (strain KCTC 2396).